The chain runs to 71 residues: UPF0435 protein SERP1418 (71 aa).

Belongs to the UPF0435 family.

This is UPF0435 protein SERP1418 from Staphylococcus epidermidis (strain ATCC 35984 / DSM 28319 / BCRC 17069 / CCUG 31568 / BM 3577 / RP62A).